A 238-amino-acid polypeptide reads, in one-letter code: Orotidine 5'-phosphate decarboxylase (238 aa).

Residues aspartate 10, lysine 32, 59–68 (DLKLHDIPNT), threonine 122, arginine 184, glutamine 193, glycine 213, and arginine 214 contribute to the substrate site. The Proton donor role is filled by lysine 61.

It belongs to the OMP decarboxylase family. Type 1 subfamily. As to quaternary structure, homodimer.

The enzyme catalyses orotidine 5'-phosphate + H(+) = UMP + CO2. Its pathway is pyrimidine metabolism; UMP biosynthesis via de novo pathway; UMP from orotate: step 2/2. Functionally, catalyzes the decarboxylation of orotidine 5'-monophosphate (OMP) to uridine 5'-monophosphate (UMP). In Bacillus mycoides (strain KBAB4) (Bacillus weihenstephanensis), this protein is Orotidine 5'-phosphate decarboxylase.